The primary structure comprises 66 residues: Small ribosomal subunit protein eS27 (66 aa).

4 residues coordinate Zn(2+): C21, C24, C40, and C43. The segment at 21 to 43 (CPNCGNEQTIFSHATFPVRCLSC) adopts a C4-type zinc-finger fold.

It belongs to the eukaryotic ribosomal protein eS27 family. In terms of assembly, part of the 30S ribosomal subunit. The cofactor is Zn(2+).

This Saccharolobus solfataricus (strain ATCC 35092 / DSM 1617 / JCM 11322 / P2) (Sulfolobus solfataricus) protein is Small ribosomal subunit protein eS27.